Consider the following 58-residue polypeptide: Small ribosomal subunit protein bS21 (58 aa).

The segment at 36–58 is disordered; that stretch reads RHHETPVEKYKRKLQQRRRSRRR. The span at 45–58 shows a compositional bias: basic residues; it reads YKRKLQQRRRSRRR.

This sequence belongs to the bacterial ribosomal protein bS21 family.

This chain is Small ribosomal subunit protein bS21, found in Prochlorococcus marinus (strain NATL1A).